The primary structure comprises 344 residues: Methylthioribose-1-phosphate isomerase (344 aa).

Substrate is bound by residues 46–48 (RGA), Arg89, and Gln196. The active-site Proton donor is Asp237. Residue 247-248 (NK) coordinates substrate.

It belongs to the eIF-2B alpha/beta/delta subunits family. MtnA subfamily.

It carries out the reaction 5-(methylsulfanyl)-alpha-D-ribose 1-phosphate = 5-(methylsulfanyl)-D-ribulose 1-phosphate. The protein operates within amino-acid biosynthesis; L-methionine biosynthesis via salvage pathway; L-methionine from S-methyl-5-thio-alpha-D-ribose 1-phosphate: step 1/6. Catalyzes the interconversion of methylthioribose-1-phosphate (MTR-1-P) into methylthioribulose-1-phosphate (MTRu-1-P). The chain is Methylthioribose-1-phosphate isomerase from Syntrophotalea carbinolica (strain DSM 2380 / NBRC 103641 / GraBd1) (Pelobacter carbinolicus).